A 383-amino-acid chain; its full sequence is Dynein axonemal assembly factor 11 (383 aa).

LRR repeat units follow at residues 20–45, 46–66, 67–89, and 90–110; these read LSNL…ACRE, LEIL…QHLK, YLKY…GCEA, and LERL…ERLR. The region spanning 128–146 is the LRRCT domain; it reads VAGYRAYVVHALPQLRELD. Positions 201-244 are disordered; it reads KGERLYGHTPEERLQMLREKEEEERRKREEQRERERSSQFGAIR. Residues 211 to 239 adopt a coiled-coil conformation; sequence EERLQMLREKEEEERRKREEQRERERSSQ.

The protein belongs to the tilB family.

It localises to the cytoplasm. It is found in the cytoskeleton. The protein resides in the flagellum basal body. In terms of biological role, involved in the regulation of the cell cycle; is required for the basal body replication and new flagellum biogenesis. The sequence is that of Dynein axonemal assembly factor 11 (dnaaf11) from Trypanosoma brucei brucei.